The primary structure comprises 362 residues: UPF0324 membrane protein YPO1307/y2878/YP_1285 (362 aa).

The next 9 membrane-spanning stretches (helical) occupy residues 21–38, 48–70, 102–124, 139–161, 168–190, 240–257, 278–300, 305–327, and 334–356; these read YIPG…ALNV, GLGA…YPWL, VADV…FILA, VMLI…EPVL, VAVA…PWLY, MIRV…SAYL, WFAV…AVWV, TLDT…IGSI, and PLLL…NLFV.

Belongs to the UPF0324 family.

It is found in the cell membrane. The polypeptide is UPF0324 membrane protein YPO1307/y2878/YP_1285 (Yersinia pestis).